The sequence spans 345 residues: Molybdopterin synthase catalytic subunit (345 aa).

Residues 101 to 102 (HR), Lys117, and 124 to 126 (KKE) each bind substrate.

The protein belongs to the MoaE family. MOCS2B subfamily. Heterotetramer; composed of 2 small (Mocs2A) and 2 large (Mocs2B) subunits.

The protein localises to the cytoplasm. The enzyme catalyses 2 [molybdopterin-synthase sulfur-carrier protein]-C-terminal-Gly-aminoethanethioate + cyclic pyranopterin phosphate + H2O = molybdopterin + 2 [molybdopterin-synthase sulfur-carrier protein]-C-terminal Gly-Gly + 2 H(+). It participates in cofactor biosynthesis; molybdopterin biosynthesis. Its function is as follows. Catalytic subunit of the molybdopterin synthase complex, a complex that catalyzes the conversion of precursor Z into molybdopterin. Acts by mediating the incorporation of 2 sulfur atoms from thiocarboxylated Mocs2A into precursor Z to generate a dithiolene group. The sequence is that of Molybdopterin synthase catalytic subunit from Drosophila virilis (Fruit fly).